A 173-amino-acid chain; its full sequence is CKLF-like MARVEL transmembrane domain-containing protein 8 (173 aa).

Residues 36–168 (FLRTLPGFLI…NTYFSFIAWR (133 aa)) form the MARVEL domain. 4 helical membrane passes run 40-60 (LPGFLIVAEIVLGLLVWTLIA), 70-90 (FGWVMFVAVFYWVLTVFFLII), 105-125 (TTVGLCFNGSAFVLYLSAAVV), and 147-167 (FFAFLVTICYAGNTYFSFIAW).

The protein belongs to the chemokine-like factor family. Highly expressed in liver and pancreas.

It localises to the membrane. The protein resides in the cytoplasm. It is found in the nucleus. In Homo sapiens (Human), this protein is CKLF-like MARVEL transmembrane domain-containing protein 8 (CMTM8).